Reading from the N-terminus, the 72-residue chain is Translation initiation factor IF-1 (72 aa).

In terms of domain architecture, S1-like spans 1–72 (MSKDDVIEMQ…TRGRITWRAK (72 aa)).

The protein belongs to the IF-1 family. Component of the 30S ribosomal translation pre-initiation complex which assembles on the 30S ribosome in the order IF-2 and IF-3, IF-1 and N-formylmethionyl-tRNA(fMet); mRNA recruitment can occur at any time during PIC assembly.

Its subcellular location is the cytoplasm. One of the essential components for the initiation of protein synthesis. Stabilizes the binding of IF-2 and IF-3 on the 30S subunit to which N-formylmethionyl-tRNA(fMet) subsequently binds. Helps modulate mRNA selection, yielding the 30S pre-initiation complex (PIC). Upon addition of the 50S ribosomal subunit IF-1, IF-2 and IF-3 are released leaving the mature 70S translation initiation complex. The polypeptide is Translation initiation factor IF-1 (Clostridium kluyveri (strain ATCC 8527 / DSM 555 / NBRC 12016 / NCIMB 10680 / K1)).